A 97-amino-acid polypeptide reads, in one-letter code: Unclassified hydrophobin F (97 aa).

A signal peptide spans 1–17; it reads MRVSALAFAAVLSLVSA. 4 disulfides stabilise this stretch: Cys-24/Cys-75, Cys-39/Cys-67, Cys-40/Cys-58, and Cys-76/Cys-85.

The protein resides in the secreted. The protein localises to the cell wall. In terms of biological role, aerial growth, conidiation, and dispersal of filamentous fungi in the environment rely upon a capability of their secreting small amphipathic proteins called hydrophobins (HPBs) with low sequence identity. Class I can self-assemble into an outermost layer of rodlet bundles on aerial cell surfaces, conferring cellular hydrophobicity that supports fungal growth, development and dispersal; whereas Class II form highly ordered films at water-air interfaces through intermolecular interactions but contribute nothing to the rodlet structure. In P.expansum, hydrophobins contribute to germination, tolerance to cold stress and mycotoxins patulin and citrinin production. HfbC, HfbD, HfbE, and HfbF have functional redundancy in fungal surface hydrophobicity. In Penicillium expansum (Blue mold rot fungus), this protein is Unclassified hydrophobin F.